The sequence spans 553 residues: Hydroxylamine reductase (553 aa).

Residues Cys3, Cys6, Cys18, and Cys25 each coordinate [2Fe-2S] cluster. His249, Glu273, Cys317, Cys405, Cys433, Cys459, Glu493, and Lys495 together coordinate hybrid [4Fe-2O-2S] cluster. Cys405 carries the post-translational modification Cysteine persulfide.

Belongs to the HCP family. The cofactor is [2Fe-2S] cluster. It depends on hybrid [4Fe-2O-2S] cluster as a cofactor.

The protein localises to the cytoplasm. It catalyses the reaction A + NH4(+) + H2O = hydroxylamine + AH2 + H(+). In terms of biological role, catalyzes the reduction of hydroxylamine to form NH(3) and H(2)O. This Mannheimia succiniciproducens (strain KCTC 0769BP / MBEL55E) protein is Hydroxylamine reductase.